The sequence spans 457 residues: Bifunctional protein GlmU (457 aa).

Residues 1–230 (MPLSLPLHIV…AREVEGVNDL (230 aa)) form a pyrophosphorylase region. UDP-N-acetyl-alpha-D-glucosamine-binding positions include 12–15 (LAAG), K26, Q78, 83–84 (GT), 105–107 (YGD), G140, E155, N170, and N228. D107 lines the Mg(2+) pocket. Residue N228 participates in Mg(2+) binding. The tract at residues 231 to 251 (WQLTQLERAWQIRAARALCLQ) is linker. The N-acetyltransferase stretch occupies residues 252-457 (GARVADPARL…DSWQRPKKKT (206 aa)). UDP-N-acetyl-alpha-D-glucosamine is bound by residues R334 and K352. The active-site Proton acceptor is the H364. 2 residues coordinate UDP-N-acetyl-alpha-D-glucosamine: Y367 and N378. Residues A381, 387-388 (NY), S406, A424, and R441 each bind acetyl-CoA.

In the N-terminal section; belongs to the N-acetylglucosamine-1-phosphate uridyltransferase family. This sequence in the C-terminal section; belongs to the transferase hexapeptide repeat family. In terms of assembly, homotrimer. Mg(2+) is required as a cofactor.

The protein resides in the cytoplasm. The enzyme catalyses alpha-D-glucosamine 1-phosphate + acetyl-CoA = N-acetyl-alpha-D-glucosamine 1-phosphate + CoA + H(+). It catalyses the reaction N-acetyl-alpha-D-glucosamine 1-phosphate + UTP + H(+) = UDP-N-acetyl-alpha-D-glucosamine + diphosphate. It functions in the pathway nucleotide-sugar biosynthesis; UDP-N-acetyl-alpha-D-glucosamine biosynthesis; N-acetyl-alpha-D-glucosamine 1-phosphate from alpha-D-glucosamine 6-phosphate (route II): step 2/2. Its pathway is nucleotide-sugar biosynthesis; UDP-N-acetyl-alpha-D-glucosamine biosynthesis; UDP-N-acetyl-alpha-D-glucosamine from N-acetyl-alpha-D-glucosamine 1-phosphate: step 1/1. It participates in bacterial outer membrane biogenesis; LPS lipid A biosynthesis. Its function is as follows. Catalyzes the last two sequential reactions in the de novo biosynthetic pathway for UDP-N-acetylglucosamine (UDP-GlcNAc). The C-terminal domain catalyzes the transfer of acetyl group from acetyl coenzyme A to glucosamine-1-phosphate (GlcN-1-P) to produce N-acetylglucosamine-1-phosphate (GlcNAc-1-P), which is converted into UDP-GlcNAc by the transfer of uridine 5-monophosphate (from uridine 5-triphosphate), a reaction catalyzed by the N-terminal domain. This is Bifunctional protein GlmU from Xylella fastidiosa (strain 9a5c).